Here is a 163-residue protein sequence, read N- to C-terminus: Neurotrophin-3 (163 aa).

The signal sequence occupies residues 1–3 (IQS). Residues 4–119 (TSMDQGILTE…VLNRTSRRKR (116 aa)) constitute a propeptide that is removed on maturation. N112 is a glycosylation site (N-linked (GlcNAc...) asparagine). The interval 113 to 133 (RTSRRKREGKSHRGEYSVCDS) is disordered. Residues 123–133 (SHRGEYSVCDS) are compositionally biased toward basic and acidic residues.

It belongs to the NGF-beta family.

The protein localises to the secreted. In terms of biological role, seems to promote the survival of visceral and proprioceptive sensory neurons. The protein is Neurotrophin-3 (NTF3) of Charina bottae (Northern rubber boa).